Reading from the N-terminus, the 914-residue chain is UPF0182 protein PTH_1387 (914 aa).

The next 7 helical transmembrane spans lie at Phe-7–Ala-27, Ile-48–Phe-68, Leu-109–Val-129, Ile-173–Phe-193, Tyr-209–Glu-229, Thr-252–Ile-272, and Leu-281–Pro-301.

This sequence belongs to the UPF0182 family.

It localises to the cell membrane. The chain is UPF0182 protein PTH_1387 from Pelotomaculum thermopropionicum (strain DSM 13744 / JCM 10971 / SI).